The chain runs to 146 residues: UPF0260 protein VF_1660 (146 aa).

It belongs to the UPF0260 family.

The polypeptide is UPF0260 protein VF_1660 (Aliivibrio fischeri (strain ATCC 700601 / ES114) (Vibrio fischeri)).